A 489-amino-acid chain; its full sequence is Ecdysteroid UDP-glucosyltransferase (489 aa).

Residues 1 to 17 (MVFLIIALTLLATGARA) form the signal peptide.

It belongs to the UDP-glycosyltransferase family.

Its function is as follows. Catalyzes the transfer of glucose from UDP-glucose to ecdysteroids which are insect molting hormones. Expression of egt interferes with normal insect development and block molting. This chain is Ecdysteroid UDP-glucosyltransferase (EGT), found in Orgyia pseudotsugata (Douglas-fir tussock moth).